A 150-amino-acid polypeptide reads, in one-letter code: U1 small nuclear ribonucleoprotein C (150 aa).

The segment at 4 to 36 adopts a Matrin-type zinc-finger fold; sequence YYCDYCKSYLTHDTMSVRKSHLQGRNHIKFYCD. A disordered region spans residues 66–132; sequence SDAKKSNGSS…GLPLPPPAVY (67 aa). Positions 80-92 are enriched in basic and acidic residues; sequence DIDKKENSSDHNK. Residues 103–112 show a composition bias toward acidic residues; it reads NDNDDDDDEM. Pro residues predominate over residues 115-130; that stretch reads LPPPPNLSGLPLPPPA.

Belongs to the U1 small nuclear ribonucleoprotein C family. As to quaternary structure, U1 snRNP is composed of the 7 core Sm proteins B/B', D1, D2, D3, E, F and G that assemble in a heptameric protein ring on the Sm site of the small nuclear RNA to form the core snRNP, and at least 3 U1 snRNP-specific proteins U1-70K, U1-A and U1-C. U1-C interacts with U1 snRNA and the 5' splice-site region of the pre-mRNA.

The protein resides in the nucleus. Its function is as follows. Component of the spliceosomal U1 snRNP, which is essential for recognition of the pre-mRNA 5' splice-site and the subsequent assembly of the spliceosome. U1-C is directly involved in initial 5' splice-site recognition for both constitutive and regulated alternative splicing. The interaction with the 5' splice-site seems to precede base-pairing between the pre-mRNA and the U1 snRNA. Stimulates commitment or early (E) complex formation by stabilizing the base pairing of the 5' end of the U1 snRNA and the 5' splice-site region. This Candida albicans (strain SC5314 / ATCC MYA-2876) (Yeast) protein is U1 small nuclear ribonucleoprotein C.